We begin with the raw amino-acid sequence, 948 residues long: Bifunctional glutamine synthetase adenylyltransferase/adenylyl-removing enzyme (948 aa).

Residues 1–444 (MSLPSALLPT…VFATLIGEED (444 aa)) form an adenylyl removase region. The adenylyl transferase stretch occupies residues 452 to 948 (ARHFHELWDM…VIQAWQQWLG (497 aa)).

Belongs to the GlnE family. It depends on Mg(2+) as a cofactor.

It carries out the reaction [glutamine synthetase]-O(4)-(5'-adenylyl)-L-tyrosine + phosphate = [glutamine synthetase]-L-tyrosine + ADP. The catalysed reaction is [glutamine synthetase]-L-tyrosine + ATP = [glutamine synthetase]-O(4)-(5'-adenylyl)-L-tyrosine + diphosphate. In terms of biological role, involved in the regulation of glutamine synthetase GlnA, a key enzyme in the process to assimilate ammonia. When cellular nitrogen levels are high, the C-terminal adenylyl transferase (AT) inactivates GlnA by covalent transfer of an adenylyl group from ATP to specific tyrosine residue of GlnA, thus reducing its activity. Conversely, when nitrogen levels are low, the N-terminal adenylyl removase (AR) activates GlnA by removing the adenylyl group by phosphorolysis, increasing its activity. The regulatory region of GlnE binds the signal transduction protein PII (GlnB) which indicates the nitrogen status of the cell. The protein is Bifunctional glutamine synthetase adenylyltransferase/adenylyl-removing enzyme of Vibrio cholerae serotype O1 (strain ATCC 39315 / El Tor Inaba N16961).